The chain runs to 87 residues: Translation initiation factor IF-1 2 (87 aa).

One can recognise an S1-like domain in the interval 1-72 (MAKEELLELD…TKGRINFRHK (72 aa)).

The protein belongs to the IF-1 family. As to quaternary structure, component of the 30S ribosomal translation pre-initiation complex which assembles on the 30S ribosome in the order IF-2 and IF-3, IF-1 and N-formylmethionyl-tRNA(fMet); mRNA recruitment can occur at any time during PIC assembly.

The protein resides in the cytoplasm. In terms of biological role, one of the essential components for the initiation of protein synthesis. Stabilizes the binding of IF-2 and IF-3 on the 30S subunit to which N-formylmethionyl-tRNA(fMet) subsequently binds. Helps modulate mRNA selection, yielding the 30S pre-initiation complex (PIC). Upon addition of the 50S ribosomal subunit IF-1, IF-2 and IF-3 are released leaving the mature 70S translation initiation complex. The protein is Translation initiation factor IF-1 2 of Burkholderia ambifaria (strain ATCC BAA-244 / DSM 16087 / CCUG 44356 / LMG 19182 / AMMD) (Burkholderia cepacia (strain AMMD)).